Reading from the N-terminus, the 431-residue chain is 5-methylthioadenosine/S-adenosylhomocysteine deaminase (431 aa).

2 residues coordinate Zn(2+): His66 and His68. Positions 95, 147, and 185 each coordinate substrate. Residue His212 participates in Zn(2+) binding. The substrate site is built by Glu215 and Asp300. Asp300 is a binding site for Zn(2+).

The protein belongs to the metallo-dependent hydrolases superfamily. MTA/SAH deaminase family. The cofactor is Zn(2+).

It carries out the reaction S-adenosyl-L-homocysteine + H2O + H(+) = S-inosyl-L-homocysteine + NH4(+). The catalysed reaction is S-methyl-5'-thioadenosine + H2O + H(+) = S-methyl-5'-thioinosine + NH4(+). Catalyzes the deamination of 5-methylthioadenosine and S-adenosyl-L-homocysteine into 5-methylthioinosine and S-inosyl-L-homocysteine, respectively. Is also able to deaminate adenosine. The sequence is that of 5-methylthioadenosine/S-adenosylhomocysteine deaminase from Desulfitobacterium hafniense (strain DSM 10664 / DCB-2).